The primary structure comprises 144 residues: Transcriptional regulator SlyA (144 aa).

Residues 2–135 (ESPLGSDLSR…LSQMISKLEK (134 aa)) form the HTH marR-type domain. The segment at residues 49–72 (QIQLAKAIGIEQPSLVRTLDQLEE) is a DNA-binding region (H-T-H motif).

Belongs to the SlyA family. As to quaternary structure, homodimer.

Functionally, transcription regulator that can specifically activate or repress expression of target genes. This is Transcriptional regulator SlyA from Wigglesworthia glossinidia brevipalpis.